Here is a 1004-residue protein sequence, read N- to C-terminus: Bifunctional glutamine synthetase adenylyltransferase/adenylyl-removing enzyme (1004 aa).

The interval M1–L496 is adenylyl removase. The adenylyl transferase stretch occupies residues R502–S1004.

This sequence belongs to the GlnE family. The cofactor is Mg(2+).

The enzyme catalyses [glutamine synthetase]-O(4)-(5'-adenylyl)-L-tyrosine + phosphate = [glutamine synthetase]-L-tyrosine + ADP. The catalysed reaction is [glutamine synthetase]-L-tyrosine + ATP = [glutamine synthetase]-O(4)-(5'-adenylyl)-L-tyrosine + diphosphate. In terms of biological role, involved in the regulation of glutamine synthetase GlnA, a key enzyme in the process to assimilate ammonia. When cellular nitrogen levels are high, the C-terminal adenylyl transferase (AT) inactivates GlnA by covalent transfer of an adenylyl group from ATP to specific tyrosine residue of GlnA, thus reducing its activity. Conversely, when nitrogen levels are low, the N-terminal adenylyl removase (AR) activates GlnA by removing the adenylyl group by phosphorolysis, increasing its activity. The regulatory region of GlnE binds the signal transduction protein PII (GlnB) which indicates the nitrogen status of the cell. The sequence is that of Bifunctional glutamine synthetase adenylyltransferase/adenylyl-removing enzyme from Nocardia farcinica (strain IFM 10152).